We begin with the raw amino-acid sequence, 284 residues long: Bifunctional protein FolD (284 aa).

Residues 166 to 168 (GAS) and Ile-232 contribute to the NADP(+) site.

The protein belongs to the tetrahydrofolate dehydrogenase/cyclohydrolase family. Homodimer.

The catalysed reaction is (6R)-5,10-methylene-5,6,7,8-tetrahydrofolate + NADP(+) = (6R)-5,10-methenyltetrahydrofolate + NADPH. It catalyses the reaction (6R)-5,10-methenyltetrahydrofolate + H2O = (6R)-10-formyltetrahydrofolate + H(+). The protein operates within one-carbon metabolism; tetrahydrofolate interconversion. Its function is as follows. Catalyzes the oxidation of 5,10-methylenetetrahydrofolate to 5,10-methenyltetrahydrofolate and then the hydrolysis of 5,10-methenyltetrahydrofolate to 10-formyltetrahydrofolate. This is Bifunctional protein FolD from Stutzerimonas stutzeri (strain A1501) (Pseudomonas stutzeri).